The chain runs to 237 residues: AA9 family lytic polysaccharide monooxygenase C (237 aa).

A signal peptide spans 1-15 (MKVLAPLILAGAASA). Cu(2+) is bound by residues H16 and H99. Disulfide bonds link C54-C185 and C155-C237. N112 carries N-linked (GlcNAc...) asparagine glycosylation. O2-binding residues include H171 and Q180. Y182 is a Cu(2+) binding site.

Belongs to the polysaccharide monooxygenase AA9 family. It depends on Cu(2+) as a cofactor.

It localises to the secreted. It carries out the reaction [(1-&gt;4)-beta-D-glucosyl]n+m + reduced acceptor + O2 = 4-dehydro-beta-D-glucosyl-[(1-&gt;4)-beta-D-glucosyl]n-1 + [(1-&gt;4)-beta-D-glucosyl]m + acceptor + H2O.. Is able to utilize various natural phenolic compounds as reducing agents. Most of these reducing agents are present in plants, either free or as lignin building blocks, such as sinapic acid, or as flavonoids such as catechin and dopamine. Phenolic compounds with 1,2-benzenediol and 1,2,3-benzenetriol moieties yield the highest release of oxidized and non-oxidized glucooligosaccharides from cellulose compared to monophenols or sulfur-containing compounds. In terms of biological role, lytic polysaccharide monooxygenase (LPMO) that depolymerizes crystalline and amorphous polysaccharides via the oxidation of scissile alpha- or beta-(1-4)-glycosidic bonds, yielding C4 oxidation products. Catalysis by LPMOs requires the reduction of the active-site copper from Cu(II) to Cu(I) by a reducing agent and H(2)O(2) or O(2) as a cosubstrate. Shows oxidative cleavage of beta-(1-3, 1-4)-glucan from oat spelt or xyloglucan from tamarind seed, in addition to cellulose. The sequence is that of AA9 family lytic polysaccharide monooxygenase C from Thermothelomyces thermophilus (strain ATCC 42464 / BCRC 31852 / DSM 1799) (Sporotrichum thermophile).